The sequence spans 433 residues: Enolase (433 aa).

Position 164 (glutamine 164) interacts with (2R)-2-phosphoglycerate. Catalysis depends on glutamate 206, which acts as the Proton donor. Mg(2+) contacts are provided by aspartate 243, glutamate 289, and aspartate 316. Positions 341, 370, 371, and 392 each coordinate (2R)-2-phosphoglycerate. Catalysis depends on lysine 341, which acts as the Proton acceptor.

The protein belongs to the enolase family. Mg(2+) is required as a cofactor.

Its subcellular location is the cytoplasm. It localises to the secreted. It is found in the cell surface. The catalysed reaction is (2R)-2-phosphoglycerate = phosphoenolpyruvate + H2O. It participates in carbohydrate degradation; glycolysis; pyruvate from D-glyceraldehyde 3-phosphate: step 4/5. In terms of biological role, catalyzes the reversible conversion of 2-phosphoglycerate (2-PG) into phosphoenolpyruvate (PEP). It is essential for the degradation of carbohydrates via glycolysis. The sequence is that of Enolase from Borrelia hermsii (strain HS1 / DAH).